The sequence spans 348 residues: MTAQPQVLKIRRPDDWHIHLRDDDMLKTVVPYTSEFYGRAIVMPNLVPPVTTVAAAIAYRQRIMDAVPAGHDFTPLMTCYLTDSLDPAELERGFNEGVFTAAKLYPANATTNSSHGVTSTDAIMPVLERMEKLGMPLLVHGEVTHAEIDIFDREARFIDTVMEPLRQRLPGLKVVFEHITTKDAAEYVRDGNELLAATITPQHLMFNRNHMLVGGIRPHLYCLPVLKRNIHQQALRELVASGFSRAFLGTDSAPHARHRKEASCGCAGCFNAPTALGSYATVFEEMNALQHFEAFCSLNGPRFYGLPVNESYVELVREETTVVDSIALPNDSLVPFLAGETVRWTMKR.

Residues histidine 17 and histidine 19 each coordinate Zn(2+). Residues 19 to 21 and asparagine 45 contribute to the substrate site; that span reads HLR. Zn(2+)-binding residues include lysine 103, histidine 140, and histidine 178. The residue at position 103 (lysine 103) is an N6-carboxylysine. Residue histidine 140 coordinates substrate. Residue leucine 223 participates in substrate binding. Aspartate 251 contributes to the Zn(2+) binding site. The active site involves aspartate 251. Residues histidine 255 and alanine 267 each coordinate substrate.

The protein belongs to the metallo-dependent hydrolases superfamily. DHOase family. Class II DHOase subfamily. In terms of assembly, homodimer. Zn(2+) serves as cofactor.

The enzyme catalyses (S)-dihydroorotate + H2O = N-carbamoyl-L-aspartate + H(+). The protein operates within pyrimidine metabolism; UMP biosynthesis via de novo pathway; (S)-dihydroorotate from bicarbonate: step 3/3. In terms of biological role, catalyzes the reversible cyclization of carbamoyl aspartate to dihydroorotate. The sequence is that of Dihydroorotase from Klebsiella pneumoniae (strain 342).